Here is a 301-residue protein sequence, read N- to C-terminus: Phosphonates import ATP-binding protein PhnC (301 aa).

An ABC transporter domain is found at 8 to 256 (IRIERLSKTF…LLKTLYGDEA (249 aa)). 41-48 (GASGSGKS) contributes to the ATP binding site. The segment at 264 to 287 (AQGPDDTESKNTADNTPLQDAAPA) is disordered.

Belongs to the ABC transporter superfamily. Phosphonates importer (TC 3.A.1.9.1) family. In terms of assembly, the complex is composed of two ATP-binding proteins (PhnC), two transmembrane proteins (PhnE) and a solute-binding protein (PhnD).

It is found in the cell inner membrane. The catalysed reaction is phosphonate(out) + ATP + H2O = phosphonate(in) + ADP + phosphate + H(+). In terms of biological role, part of the ABC transporter complex PhnCDE involved in phosphonates import. Responsible for energy coupling to the transport system. This is Phosphonates import ATP-binding protein PhnC from Paraburkholderia xenovorans (strain LB400).